The chain runs to 767 residues: Two-component response regulator-like PRR73 (767 aa).

Residues M1–E64 form a disordered region. One can recognise a Response regulatory domain in the interval R82–W200. Low complexity predominate over residues S205 to G214. Disordered regions lie at residues S205–W272, R312–T388, A476–V546, A646–G701, and N727–R767. Positions D238 to L252 are enriched in acidic residues. Composition is skewed to polar residues over residues D263 to W272, R343 to T361, and C488 to A497. A compositionally biased stretch (low complexity) spans G518–S531. A compositionally biased stretch (polar residues) spans T532–R543. A compositionally biased stretch (gly residues) spans G689–S700. In terms of domain architecture, CCT spans R712–Q754. Basic residues predominate over residues N727–K738.

Belongs to the ARR-like family.

Its subcellular location is the nucleus. Functionally, controls photoperiodic flowering response. Seems to be one of the component of the circadian clock. Expression of several members of the ARR-like family is controlled by circadian rhythm. The particular coordinated sequential expression of PRR73, PRR37, PRR95, PRR59 and PPR1 result to circadian waves that may be at the basis of the endogenous circadian clock. This chain is Two-component response regulator-like PRR73 (PRR73), found in Oryza sativa subsp. japonica (Rice).